The primary structure comprises 172 residues: Trypsin inhibitor 1B (172 aa).

2 disulfide bridges follow: Cys-40/Cys-84 and Cys-133/Cys-139.

It belongs to the protease inhibitor I3 (leguminous Kunitz-type inhibitor) family.

WTI-1B inhibits trypsin stoichiometrically. The chain is Trypsin inhibitor 1B from Psophocarpus tetragonolobus (Winged bean).